We begin with the raw amino-acid sequence, 156 residues long: 6,7-dimethyl-8-ribityllumazine synthase (156 aa).

5-amino-6-(D-ribitylamino)uracil-binding positions include Phe25, 59-61, and 83-85; these read AFE and AVI. 88 to 89 contributes to the (2S)-2-hydroxy-3-oxobutyl phosphate binding site; the sequence is AT. His91 (proton donor) is an active-site residue. A 5-amino-6-(D-ribitylamino)uracil-binding site is contributed by Phe116. Residue Arg130 participates in (2S)-2-hydroxy-3-oxobutyl phosphate binding.

This sequence belongs to the DMRL synthase family.

It carries out the reaction (2S)-2-hydroxy-3-oxobutyl phosphate + 5-amino-6-(D-ribitylamino)uracil = 6,7-dimethyl-8-(1-D-ribityl)lumazine + phosphate + 2 H2O + H(+). The protein operates within cofactor biosynthesis; riboflavin biosynthesis; riboflavin from 2-hydroxy-3-oxobutyl phosphate and 5-amino-6-(D-ribitylamino)uracil: step 1/2. Functionally, catalyzes the formation of 6,7-dimethyl-8-ribityllumazine by condensation of 5-amino-6-(D-ribitylamino)uracil with 3,4-dihydroxy-2-butanone 4-phosphate. This is the penultimate step in the biosynthesis of riboflavin. This Nitratidesulfovibrio vulgaris (strain ATCC 29579 / DSM 644 / CCUG 34227 / NCIMB 8303 / VKM B-1760 / Hildenborough) (Desulfovibrio vulgaris) protein is 6,7-dimethyl-8-ribityllumazine synthase.